The chain runs to 129 residues: Transcription antitermination protein NusB (129 aa).

It belongs to the NusB family.

Functionally, involved in transcription antitermination. Required for transcription of ribosomal RNA (rRNA) genes. Binds specifically to the boxA antiterminator sequence of the ribosomal RNA (rrn) operons. The protein is Transcription antitermination protein NusB of Staphylococcus aureus (strain N315).